We begin with the raw amino-acid sequence, 314 residues long: Large ribosomal subunit protein uL10 (314 aa).

The tract at residues 281–314 (GSTQETPEEKKEEAKKEEKSPDESISEGLGALFQ) is disordered. Residues 287 to 302 (PEEKKEEAKKEEKSPD) show a composition bias toward basic and acidic residues.

This sequence belongs to the universal ribosomal protein uL10 family. In terms of assembly, part of the 50S ribosomal subunit. Forms part of the ribosomal stalk which helps the ribosome interact with GTP-bound translation factors. Forms a heptameric L10(L12)2(L12)2(L12)2 complex, where L10 forms an elongated spine to which the L12 dimers bind in a sequential fashion.

Its function is as follows. Forms part of the ribosomal stalk, playing a central role in the interaction of the ribosome with GTP-bound translation factors. In Thermoplasma acidophilum (strain ATCC 25905 / DSM 1728 / JCM 9062 / NBRC 15155 / AMRC-C165), this protein is Large ribosomal subunit protein uL10.